The primary structure comprises 181 residues: Transcription termination/antitermination protein NusG (181 aa).

Residues 130–158 enclose the KOW domain; sequence PGETVRVNDGPFSDFNGIVEEVDYEKNRL.

This sequence belongs to the NusG family. As to quaternary structure, monomer. Interacts with the transcription termination factor Rho and with RNA polymerase.

Participates in transcription elongation, termination and antitermination. In the absence of Rho, increases the rate of transcription elongation by the RNA polymerase (RNAP), probably by partially suppressing pausing. In the presence of Rho, modulates most Rho-dependent termination events by interacting with the RNAP to render the complex more susceptible to the termination activity of Rho. May be required to overcome a kinetic limitation of Rho to function at certain terminators. Also involved in ribosomal RNA transcriptional antitermination. This chain is Transcription termination/antitermination protein NusG, found in Buchnera aphidicola subsp. Baizongia pistaciae (strain Bp).